The chain runs to 1117 residues: DNA polymerase II large subunit (1117 aa).

A compositionally biased stretch (basic and acidic residues) spans 279–294; the sequence is STKEEEKKKEESSENK. Residues 279 to 299 are disordered; the sequence is STKEEEKKKEESSENKPKKKA.

It belongs to the archaeal DNA polymerase II family. Heterodimer of a large subunit and a small subunit.

It catalyses the reaction DNA(n) + a 2'-deoxyribonucleoside 5'-triphosphate = DNA(n+1) + diphosphate. The catalysed reaction is Exonucleolytic cleavage in the 3'- to 5'-direction to yield nucleoside 5'-phosphates.. Its function is as follows. Possesses two activities: a DNA synthesis (polymerase) and an exonucleolytic activity that degrades single-stranded DNA in the 3'- to 5'-direction. Has a template-primer preference which is characteristic of a replicative DNA polymerase. This chain is DNA polymerase II large subunit, found in Methanosphaera stadtmanae (strain ATCC 43021 / DSM 3091 / JCM 11832 / MCB-3).